Consider the following 133-residue polypeptide: MTDGEGEAGDRRARGREAERIAEAFLSRAGFEILDRNHATRRGEVDLVCREGSVVCFVEVRSRTSTAQGGPEETVGRGKARRVVAAATDWALRNGGLEQEMRFDVVAVTFEEAGPRVALYRGAFDGEGKPGLW.

This sequence belongs to the UPF0102 family.

The polypeptide is UPF0102 protein Anae109_1947 (Anaeromyxobacter sp. (strain Fw109-5)).